A 902-amino-acid chain; its full sequence is Chloride channel protein 2 (902 aa).

At 1 to 89 (MAASAAAAGE…RCHKFLVSRV (89 aa)) the chain is on the cytoplasmic side. The essential for channel gating by both voltage and cell volume stretch occupies residues 18–36 (QYEQTLMYGRYTQELGAFA). A Phosphothreonine modification is found at Thr-22. The modulates channel gating by both voltage and cell volume stretch occupies residues 38-51 (EEAARIRLGGPEPW). 2 helical membrane-spanning segments follow: residues 90–123 (GEDWIFLVLLGLLMALVSWAMDYAIAVCLQAQQW) and 132–157 (ILLQYLAWVTYPVVLITFSAGFTQIL). Residues 163 to 167 (GSGIP) carry the Selectivity filter part_1 motif. The helical intramembrane region spans 166–173 (IPEMKTIL). 2 consecutive transmembrane segments (helical) span residues 182–200 (LTLKTFVAKVIGLTCALGS) and 207–225 (EGPFVHIASMCASLLSKFL). The Selectivity filter part_2 motif lies at 205–209 (GKEGP). Intramembrane regions (helical) lie at residues 241-253 (MLAAACAVGVGCC) and 257-265 (PIGGVLFSI). 5 helical membrane passes run 277-297 (YWRGFFSATFSAFIFRVLAVW), 323-351 (LPAFAVIGIASGFGGALFVYLNRKIVQVM), 360-379 (FLMRKRLLFPALVTLLISTL), 431-451 (ANVFLTLVIFILMKFWMSALA), and 459-482 (GAFMPVFVIGAAFGRLVGESMAAW). Positions 459-463 (GAFMP) match the Selectivity filter part_3 motif. The helical intramembrane region spans 499-513 (GGYAVVGAAALAGAV). Positions 514-515 (TH) form an intramembrane region, note=Loop between two helices. The helical intramembrane region spans 516-527 (TVSTAVIVFELT). An intramembrane region (note=Loop between two helices) is located at residues 528 to 532 (GQIAH). The chain crosses the membrane as a helical span at residues 533–550 (ILPVMIAVILANAVAQSL). The Cytoplasmic segment spans residues 551 to 902 (QPSLYDSIIR…SPSDSDDKCQ (352 aa)). In terms of domain architecture, CBS 1 spans 586 to 644 (MVRDVPYVALNCTFRDLRLALHRTKGRMLALVESSESMILLGSIERSQVVTLLGAQLSA). A disordered region spans residues 648–748 (RQHIQERRKA…TSDLEKPESC (101 aa)). 2 stretches are compositionally biased toward polar residues: residues 671 to 683 (PESSVHFQVNTED) and 706 to 719 (SNASKAGETSTGSM). Residues 794-854 (IDPAPFQLVE…GSVTAQGVKV (61 aa)) form the CBS 2 domain. The short motif at 816-817 (LL) is the Basolateral membrane sorting element. The disordered stretch occupies residues 860-902 (SFRDSATSSSDTETTEVHALWGPHSCHGLPRDGSPSDSDDKCQ).

Belongs to the chloride channel (TC 2.A.49) family. ClC-2/CLCN2 subfamily. In terms of assembly, homodimer. Interacts with auxiliary subunit HEPACAM.

It localises to the cell membrane. Its subcellular location is the basolateral cell membrane. The protein localises to the cell projection. The protein resides in the dendritic spine membrane. It is found in the axon. The enzyme catalyses chloride(in) = chloride(out). It carries out the reaction thiocyanate(in) = thiocyanate(out). The catalysed reaction is bromide(in) = bromide(out). It catalyses the reaction nitrate(in) = nitrate(out). The enzyme catalyses iodide(out) = iodide(in). Common gate kinetics are down-regulated by intracellular ATP. Inhibited by AK-42, a derivative of meclofenamate. Inhibited by Cd(2+). Inhibited by Zn(2+) and PKC activation. Inhibited at acidic pH. CCLN2:HEPACAM channel conductance is up-regulated upon hypo-osmolarity. Voltage-gated and osmosensitive chloride channel. Forms a homodimeric channel where each subunit has its own ion conduction pathway. Conducts double-barreled currents controlled by two types of gates, two fast glutamate gates that control each subunit independently and a slow common gate that opens and shuts off both subunits simultaneously. Displays inward rectification currents activated upon membrane hyperpolarization and extracellular hypotonicity. Contributes to chloride conductance involved in neuron excitability. In hippocampal neurons, generates a significant part of resting membrane conductance and provides an additional chloride efflux pathway to prevent chloride accumulation in dendrites upon GABA receptor activation. In glia, associates with the auxiliary subunit HEPACAM/GlialCAM at astrocytic processes and myelinated fiber tracts where it may regulate transcellular chloride flux buffering extracellular chloride and potassium concentrations. Regulates aldosterone production in adrenal glands. The opening of CLCN2 channels at hyperpolarized membrane potentials in the glomerulosa causes cell membrane depolarization, activation of voltage-gated calcium channels and increased expression of aldosterone synthase, the rate-limiting enzyme for aldosterone biosynthesis. Contributes to chloride conductance in retinal pigment epithelium involved in phagocytosis of shed photoreceptor outer segments and photoreceptor renewal. Conducts chloride currents at the basolateral membrane of epithelial cells with a role in chloride reabsorption rather than secretion. Permeable to small monovalent anions with chloride &gt; thiocyanate &gt; bromide &gt; nitrate &gt; iodide ion selectivity. This Cavia porcellus (Guinea pig) protein is Chloride channel protein 2 (CLCN2).